Reading from the N-terminus, the 217-residue chain is Probable transaldolase (217 aa).

K83 functions as the Schiff-base intermediate with substrate in the catalytic mechanism.

Belongs to the transaldolase family. Type 3B subfamily.

It is found in the cytoplasm. It carries out the reaction D-sedoheptulose 7-phosphate + D-glyceraldehyde 3-phosphate = D-erythrose 4-phosphate + beta-D-fructose 6-phosphate. Its pathway is carbohydrate degradation; pentose phosphate pathway; D-glyceraldehyde 3-phosphate and beta-D-fructose 6-phosphate from D-ribose 5-phosphate and D-xylulose 5-phosphate (non-oxidative stage): step 2/3. In terms of biological role, transaldolase is important for the balance of metabolites in the pentose-phosphate pathway. The sequence is that of Probable transaldolase from Bartonella bacilliformis (strain ATCC 35685 / KC583 / Herrer 020/F12,63).